Consider the following 132-residue polypeptide: Small ribosomal subunit protein uS8c (132 aa).

Belongs to the universal ribosomal protein uS8 family. In terms of assembly, part of the 30S ribosomal subunit.

The protein resides in the plastid. Its subcellular location is the chloroplast. In terms of biological role, one of the primary rRNA binding proteins, it binds directly to 16S rRNA central domain where it helps coordinate assembly of the platform of the 30S subunit. The polypeptide is Small ribosomal subunit protein uS8c (rps8) (Rhodomonas salina (Cryptomonas salina)).